We begin with the raw amino-acid sequence, 161 residues long: Urease accessory protein UreE (161 aa).

The interval 133 to 161 (EPEAGAYQSAPHSHSHAHDHPFVRLPAHS) is disordered.

This sequence belongs to the UreE family.

It localises to the cytoplasm. Functionally, involved in urease metallocenter assembly. Binds nickel. Probably functions as a nickel donor during metallocenter assembly. In Pseudomonas putida (strain W619), this protein is Urease accessory protein UreE.